A 484-amino-acid polypeptide reads, in one-letter code: MKTTVEKLSPTRVKLAISATPEDLKPHIDHAYGHIAEQVAIPGFRKGKVPPPIIDQRVGREAVLEHAVNDGMDGFYQAAVKETDIRPLGRPEADVKEWPGKDLTGDLLLEIEVDVRPEFDLPAYEGLELTVDSVEVTDDEVATELDSLRSRFGTLITVDRPAKTGDFVQIDLTATIGGNAVDTASGISYELGSGDLIDGIDEALESLTAGESTTFESKLLGGDNEGETAEIAVTVQSVKERELPEADDDFAQIASEFDTIDELRADLKVQVGKSKVFGQVTQARDQIVDKLLEGVEIPVPEKLVEDEVQRHLENENRLEDDVHRAEVKESSEKAFRQQLLLDVIAEKEELKVSQDELTQYLIQGAQQYNMEPNEFVQVLQQNNQIPAMVGEVARNKALAVVLDKAKVVDADGKVVDVTEFTKPVVRDADAVSEEPADADAEAVVADAPAEEAAEAPAAEEAPAEKPKKKAPAKKKASEKAADSE.

The 80-residue stretch at 165-244 (GDFVQIDLTA…VQSVKERELP (80 aa)) folds into the PPIase FKBP-type domain. The tract at residues 429-484 (DAVSEEPADADAEAVVADAPAEEAAEAPAAEEAPAEKPKKKAPAKKKASEKAADSE) is disordered. Positions 430-440 (AVSEEPADADA) are enriched in acidic residues. Residues 475-484 (KASEKAADSE) show a composition bias toward basic and acidic residues.

The protein belongs to the FKBP-type PPIase family. Tig subfamily.

The protein localises to the cytoplasm. It catalyses the reaction [protein]-peptidylproline (omega=180) = [protein]-peptidylproline (omega=0). Involved in protein export. Acts as a chaperone by maintaining the newly synthesized protein in an open conformation. Functions as a peptidyl-prolyl cis-trans isomerase. The polypeptide is Trigger factor (Clavibacter michiganensis subsp. michiganensis (strain NCPPB 382)).